The sequence spans 513 residues: ATP synthase subunit alpha (513 aa).

169-176 (GDRQTGKT) lines the ATP pocket.

Belongs to the ATPase alpha/beta chains family. In terms of assembly, F-type ATPases have 2 components, CF(1) - the catalytic core - and CF(0) - the membrane proton channel. CF(1) has five subunits: alpha(3), beta(3), gamma(1), delta(1), epsilon(1). CF(0) has three main subunits: a(1), b(2) and c(9-12). The alpha and beta chains form an alternating ring which encloses part of the gamma chain. CF(1) is attached to CF(0) by a central stalk formed by the gamma and epsilon chains, while a peripheral stalk is formed by the delta and b chains.

Its subcellular location is the cell inner membrane. The enzyme catalyses ATP + H2O + 4 H(+)(in) = ADP + phosphate + 5 H(+)(out). Functionally, produces ATP from ADP in the presence of a proton gradient across the membrane. The alpha chain is a regulatory subunit. In Shewanella oneidensis (strain ATCC 700550 / JCM 31522 / CIP 106686 / LMG 19005 / NCIMB 14063 / MR-1), this protein is ATP synthase subunit alpha.